The following is a 551-amino-acid chain: Harmonin (551 aa).

The tract at residues 1–86 (MDRKVAREFR…LTPRRSRKLK (86 aa)) is N-terminal domain. 2 PDZ domains span residues 87 to 169 (EVRL…HIGL) and 211 to 293 (KVFI…AGAG). Residues 194 to 532 (GGRSSLGSPG…QKAWNQGDWI (339 aa)) are mediates interaction with MYO7B. Serine 219 bears the Phosphoserine mark. The stretch at 318 to 377 (LMQKRLAMESNKILQEQQEMERQRKKEIAQKAAEENERYRKEMEQIVEEEEKFRKQWEED) forms a coiled coil. A disordered region spans residues 401 to 425 (KPKYDLGVDPEFDPADDLDGGTNKR). Acidic residues predominate over residues 408–419 (VDPEFDPADDLD). Residues 452 to 536 (DVRLLRVKKE…NQGDWIDLVV (85 aa)) enclose the PDZ 3 domain.

In terms of assembly, part of the IMAC/intermicrovillar adhesion complex/intermicrovillar tip-link complex composed of ANKS4B, MYO7B, USH1C, CDHR2 and CDHR5. Part of a complex composed of USH1C, USH1G and MYO7A. Interacts with F-actin. Interacts with USH2A. Interacts with SLC4A7. Interacts (via PDZ1 domain) with the C-terminus of USHBP1. Interacts (via N-terminus and PDZ 2 domain) with CDH23. Interacts with USH1G. Interacts with MYO7B. Interacts with CDHR2 and CDHR5; may mediate their interaction with MYO7B at the microvilli tip. Interacts (via PDZ 1 domain) with ANKS4B. Interacts (via PDZ 1 domain) with DOCK4.

The protein resides in the cytoplasm. It localises to the cytosol. Its subcellular location is the cytoskeleton. The protein localises to the cell projection. It is found in the microvillus. Its function is as follows. Anchoring/scaffolding protein that is a part of the functional network formed by USH1C, USH1G, CDH23 and MYO7A that mediates mechanotransduction in cochlear hair cells. Required for normal development and maintenance of cochlear hair cell bundles. As part of the intermicrovillar adhesion complex/IMAC plays a role in brush border differentiation, controlling microvilli organization and length. Probably plays a central regulatory role in the assembly of the complex, recruiting CDHR2, CDHR5 and MYO7B to the microvilli tips. This is Harmonin (USH1C) from Bos taurus (Bovine).